A 106-amino-acid polypeptide reads, in one-letter code: Phosphoribosyl-ATP pyrophosphatase (106 aa).

Belongs to the PRA-PH family.

It is found in the cytoplasm. It catalyses the reaction 1-(5-phospho-beta-D-ribosyl)-ATP + H2O = 1-(5-phospho-beta-D-ribosyl)-5'-AMP + diphosphate + H(+). It participates in amino-acid biosynthesis; L-histidine biosynthesis; L-histidine from 5-phospho-alpha-D-ribose 1-diphosphate: step 2/9. In Lactiplantibacillus plantarum (strain ATCC BAA-793 / NCIMB 8826 / WCFS1) (Lactobacillus plantarum), this protein is Phosphoribosyl-ATP pyrophosphatase.